A 185-amino-acid polypeptide reads, in one-letter code: Tetratricopeptide repeat protein 36 homolog (185 aa).

TPR repeat units follow at residues 53–86 (SREL…AQRA), 88–119 (VLNN…ANDQ), and 125–158 (CHAH…GSKF).

Belongs to the TTC36 family.

This Drosophila melanogaster (Fruit fly) protein is Tetratricopeptide repeat protein 36 homolog.